The primary structure comprises 285 residues: Protoheme IX farnesyltransferase (285 aa).

A run of 9 helical transmembrane segments spans residues 8 to 28, 36 to 56, 80 to 100, 107 to 127, 133 to 153, 163 to 183, 209 to 229, 232 to 252, and 265 to 285; these read ITKP…FLFA, YVLF…ACVF, LLPV…GLSI, FISM…YTMF, FYST…GYTA, ILLF…ISIM, IFFY…LGYL, NFLL…YSNI, and FYFS…DVFF.

This sequence belongs to the UbiA prenyltransferase family. Protoheme IX farnesyltransferase subfamily.

The protein localises to the cell membrane. The enzyme catalyses heme b + (2E,6E)-farnesyl diphosphate + H2O = Fe(II)-heme o + diphosphate. The protein operates within porphyrin-containing compound metabolism; heme O biosynthesis; heme O from protoheme: step 1/1. Functionally, converts heme B (protoheme IX) to heme O by substitution of the vinyl group on carbon 2 of heme B porphyrin ring with a hydroxyethyl farnesyl side group. In Buchnera aphidicola subsp. Acyrthosiphon pisum (strain Tuc7), this protein is Protoheme IX farnesyltransferase.